An 87-amino-acid polypeptide reads, in one-letter code: Phosphocarrier protein HPr (87 aa).

Positions 1 to 87 constitute an HPr domain; sequence MASKDFHIVA…AETMTKEGLA (87 aa). Histidine 15 functions as the Pros-phosphohistidine intermediate in the catalytic mechanism. Serine 46 carries the post-translational modification Phosphoserine; by HPrK/P.

It belongs to the HPr family.

Its subcellular location is the cytoplasm. Phosphorylation on Ser-46 inhibits the phosphoryl transfer from enzyme I to HPr. General (non sugar-specific) component of the phosphoenolpyruvate-dependent sugar phosphotransferase system (sugar PTS). This major carbohydrate active-transport system catalyzes the phosphorylation of incoming sugar substrates concomitantly with their translocation across the cell membrane. The phosphoryl group from phosphoenolpyruvate (PEP) is transferred to the phosphoryl carrier protein HPr by enzyme I. Phospho-HPr then transfers it to the PTS EIIA domain. Its function is as follows. P-Ser-HPr interacts with the catabolite control protein A (CcpA), forming a complex that binds to DNA at the catabolite response elements cre, operator sites preceding a large number of catabolite-regulated genes. Thus, P-Ser-HPr is a corepressor in carbon catabolite repression (CCR), a mechanism that allows bacteria to coordinate and optimize the utilization of available carbon sources. P-Ser-HPr also plays a role in inducer exclusion, in which it probably interacts with several non-PTS permeases and inhibits their transport activity. This Streptococcus salivarius protein is Phosphocarrier protein HPr (ptsH).